Consider the following 254-residue polypeptide: Type III pantothenate kinase (254 aa).

Residue 6 to 13 (DVGNTNIV) participates in ATP binding. Residues Phe-100 and 107 to 110 (GADR) each bind substrate. Asp-109 functions as the Proton acceptor in the catalytic mechanism. A K(+)-binding site is contributed by Asp-129. Thr-132 is a binding site for ATP. Substrate is bound at residue Thr-184.

Belongs to the type III pantothenate kinase family. As to quaternary structure, homodimer. NH4(+) is required as a cofactor. Requires K(+) as cofactor.

It localises to the cytoplasm. The catalysed reaction is (R)-pantothenate + ATP = (R)-4'-phosphopantothenate + ADP + H(+). It participates in cofactor biosynthesis; coenzyme A biosynthesis; CoA from (R)-pantothenate: step 1/5. Catalyzes the phosphorylation of pantothenate (Pan), the first step in CoA biosynthesis. The polypeptide is Type III pantothenate kinase (Moorella thermoacetica (strain ATCC 39073 / JCM 9320)).